The primary structure comprises 429 residues: 4-hydroxybutyrate coenzyme A transferase (429 aa).

215 to 219 is a binding site for CoA; sequence GIGAI. Catalysis depends on Glu238, which acts as the 5-glutamyl coenzyme A thioester intermediate. Gly336 contacts CoA.

Belongs to the acetyl-CoA hydrolase/transferase family.

The chain is 4-hydroxybutyrate coenzyme A transferase (cat2) from Clostridium kluyveri (strain ATCC 8527 / DSM 555 / NBRC 12016 / NCIMB 10680 / K1).